The chain runs to 661 residues: MKDRFELVSKYQPQGDQPQAIEKLVKGIQEGRKHQTLMGATGTGKTFTVSNLIKEVNKPTLVIAHNKTLAGQLYSEFKEFFPNNAVEYFVSYYDYYQPEAYVPQTDTFIEKDASINDEIDKLRHSATSSLFERRDVIIIASVSCIYGLGSPEEYREMVVSLRPEMEIERNELLRKLVDIQYARNDIDFQRGTFRVRGDVVEIFPASRDEHCIRVEFFGDEIERIREVDALTGEILGDRDHVAIFPASHFVTRAEKMEKAILNIEQELEERLKVMHENGKLLEAQRLEQRTRYDLEMMREMGFCSGIENYSRHLTLRPPGSTPYTLLDYFPDDFMIVVDESHVTIPQVRGMFNGDQARKQVLVDHGFRLPSALDNRPLRFEEFEKHMHNIVYVSATPGPYEIEHTPEMIEQIIRPTGLLDPLIDVRPIEGQIDDLIGEIQARIERNERVLVTTLTKKMSEDLTDYLKEIGIKVNYLHSEIKTLERIEIIRDLRLGKHDVLIGINLLREGLDIPEVSLVAILDADKEGFLRSERSLIQTIGRAARNAEGRVIMYADKITNSMEIAINETKRRREQQERFNEIHGITPQTINKEIRDVIRATQAAEDKEEYKTKAAPKLAKMTKKERQKVVEQMEHEMKEAARALDFERAAELRDLLLELKAEG.

Positions 26–181 (KGIQEGRKHQ…LLRKLVDIQY (156 aa)) constitute a Helicase ATP-binding domain. 39 to 46 (GATGTGKT) is a binding site for ATP. The Beta-hairpin signature appears at 92 to 115 (YYDYYQPEAYVPQTDTFIEKDASI). Positions 430-596 (QIDDLIGEIQ…TINKEIRDVI (167 aa)) constitute a Helicase C-terminal domain. A UVR domain is found at 625–660 (QKVVEQMEHEMKEAARALDFERAAELRDLLLELKAE).

Belongs to the UvrB family. Forms a heterotetramer with UvrA during the search for lesions. Interacts with UvrC in an incision complex.

The protein localises to the cytoplasm. The UvrABC repair system catalyzes the recognition and processing of DNA lesions. A damage recognition complex composed of 2 UvrA and 2 UvrB subunits scans DNA for abnormalities. Upon binding of the UvrA(2)B(2) complex to a putative damaged site, the DNA wraps around one UvrB monomer. DNA wrap is dependent on ATP binding by UvrB and probably causes local melting of the DNA helix, facilitating insertion of UvrB beta-hairpin between the DNA strands. Then UvrB probes one DNA strand for the presence of a lesion. If a lesion is found the UvrA subunits dissociate and the UvrB-DNA preincision complex is formed. This complex is subsequently bound by UvrC and the second UvrB is released. If no lesion is found, the DNA wraps around the other UvrB subunit that will check the other stand for damage. The chain is UvrABC system protein B from Bacillus velezensis (strain DSM 23117 / BGSC 10A6 / LMG 26770 / FZB42) (Bacillus amyloliquefaciens subsp. plantarum).